The primary structure comprises 330 residues: MFKNKLAVLFTCLSVFSFSAQSGSFDTVTLGSKGGIQDGNLTAFLIKSEADSNFVMLDAGSVVNGLIVSEQKGAFKDITVPDSSPYTKVGYLLKDRIKGYFISHAHLDHVAGLIISSPDDSKKPIYGLAATNKDLMKNYFNWSAWPNFGNKGEGFKLNKYNYVDLQPGVWSPVAETTMSVVSLPLSHSGGQSTVFILKDSEGDVFAYFGDTGPDEVEKSSAMRTAWSVLAPFVKQGKLKGIIIEVSFTNETPDKSLFGHLTPNWLVKELSVLEDMNGKGSLKDLNVAISHIKYSLKNSEDPKVIIKKQLVEVNDLGVNFIFPEQGDSLQF.

A signal peptide spans 1–22 (MFKNKLAVLFTCLSVFSFSAQS).

It belongs to the cyclic nucleotide phosphodiesterase class-II family.

It is found in the periplasm. It carries out the reaction a nucleoside 3',5'-cyclic phosphate + H2O = a nucleoside 5'-phosphate + H(+). In terms of biological role, seems to allow the organism to grow on cAMP. The protein is 3',5'-cyclic-nucleotide phosphodiesterase (cpdP) of Aliivibrio fischeri (Vibrio fischeri).